Here is an 83-residue protein sequence, read N- to C-terminus: Cytochrome b559 subunit alpha (83 aa).

Residues 21–35 (VIHSITIPSLFIAGW) form a helical membrane-spanning segment. His-23 is a heme binding site.

This sequence belongs to the PsbE/PsbF family. Heterodimer of an alpha subunit and a beta subunit. PSII is composed of 1 copy each of membrane proteins PsbA, PsbB, PsbC, PsbD, PsbE, PsbF, PsbH, PsbI, PsbJ, PsbK, PsbL, PsbM, PsbT, PsbX, PsbY, PsbZ, Psb30/Ycf12, at least 3 peripheral proteins of the oxygen-evolving complex and a large number of cofactors. It forms dimeric complexes. Heme b is required as a cofactor.

Its subcellular location is the plastid. It is found in the chloroplast thylakoid membrane. Functionally, this b-type cytochrome is tightly associated with the reaction center of photosystem II (PSII). PSII is a light-driven water:plastoquinone oxidoreductase that uses light energy to abstract electrons from H(2)O, generating O(2) and a proton gradient subsequently used for ATP formation. It consists of a core antenna complex that captures photons, and an electron transfer chain that converts photonic excitation into a charge separation. The sequence is that of Cytochrome b559 subunit alpha from Marchantia polymorpha (Common liverwort).